Here is a 248-residue protein sequence, read N- to C-terminus: Acetylglutamate kinase (248 aa).

Substrate contacts are provided by residues 41 to 42, Arg63, and Asn155; that span reads GG.

It belongs to the acetylglutamate kinase family. ArgB subfamily.

It is found in the cytoplasm. The enzyme catalyses N-acetyl-L-glutamate + ATP = N-acetyl-L-glutamyl 5-phosphate + ADP. It participates in amino-acid biosynthesis; L-arginine biosynthesis; N(2)-acetyl-L-ornithine from L-glutamate: step 2/4. Catalyzes the ATP-dependent phosphorylation of N-acetyl-L-glutamate. This chain is Acetylglutamate kinase, found in Lactiplantibacillus plantarum (strain ATCC BAA-793 / NCIMB 8826 / WCFS1) (Lactobacillus plantarum).